We begin with the raw amino-acid sequence, 252 residues long: 2-succinyl-6-hydroxy-2,4-cyclohexadiene-1-carboxylate synthase (252 aa).

This sequence belongs to the AB hydrolase superfamily. MenH family. As to quaternary structure, monomer.

The catalysed reaction is 5-enolpyruvoyl-6-hydroxy-2-succinyl-cyclohex-3-ene-1-carboxylate = (1R,6R)-6-hydroxy-2-succinyl-cyclohexa-2,4-diene-1-carboxylate + pyruvate. The protein operates within quinol/quinone metabolism; 1,4-dihydroxy-2-naphthoate biosynthesis; 1,4-dihydroxy-2-naphthoate from chorismate: step 3/7. It participates in quinol/quinone metabolism; menaquinone biosynthesis. Functionally, catalyzes a proton abstraction reaction that results in 2,5-elimination of pyruvate from 2-succinyl-5-enolpyruvyl-6-hydroxy-3-cyclohexene-1-carboxylate (SEPHCHC) and the formation of 2-succinyl-6-hydroxy-2,4-cyclohexadiene-1-carboxylate (SHCHC). The chain is 2-succinyl-6-hydroxy-2,4-cyclohexadiene-1-carboxylate synthase from Escherichia coli O157:H7.